A 96-amino-acid chain; its full sequence is Co-chaperonin GroES (96 aa).

This sequence belongs to the GroES chaperonin family. As to quaternary structure, heptamer of 7 subunits arranged in a ring. Interacts with the chaperonin GroEL.

It is found in the cytoplasm. Together with the chaperonin GroEL, plays an essential role in assisting protein folding. The GroEL-GroES system forms a nano-cage that allows encapsulation of the non-native substrate proteins and provides a physical environment optimized to promote and accelerate protein folding. GroES binds to the apical surface of the GroEL ring, thereby capping the opening of the GroEL channel. This Shewanella amazonensis (strain ATCC BAA-1098 / SB2B) protein is Co-chaperonin GroES.